A 257-amino-acid chain; its full sequence is UPF0246 protein RSc2009 (257 aa).

Belongs to the UPF0246 family.

This Ralstonia nicotianae (strain ATCC BAA-1114 / GMI1000) (Ralstonia solanacearum) protein is UPF0246 protein RSc2009.